Consider the following 147-residue polypeptide: Hemoglobin subunit gamma (147 aa).

Residues 3–147 (NFTAEDKAAI…VASALGSRYH (145 aa)) enclose the Globin domain. Residues His-64 and His-93 each coordinate heme b.

This sequence belongs to the globin family. As to quaternary structure, heterotetramer of two alpha chains and two gamma chains in fetal hemoglobin (Hb F). In terms of tissue distribution, red blood cells.

In terms of biological role, gamma chains make up the fetal hemoglobin F, in combination with alpha chains. The protein is Hemoglobin subunit gamma (HBG) of Aotus azarae (Azara's night monkey).